The chain runs to 249 residues: Long form salivary protein D7L (249 aa).

Positions 1-19 (MNAVITSLVFISLVGVGYS) are cleaved as a signal peptide. 2 disulfides stabilise this stretch: Cys-36-Cys-66 and Cys-62-Cys-112. Trp-49 is a thromboxane A2 binding site. Position 52 (Trp-52) interacts with leukotriene C4. Thromboxane A2 is bound at residue Tyr-63. Gly-136 and Lys-154 together coordinate leukotriene C4. Lys-154 contacts thromboxane A2. 3 cysteine pairs are disulfide-bonded: Cys-162/Cys-178, Cys-174/Cys-221, and Cys-211/Cys-230.

This sequence belongs to the PBP/GOBP family.

It is found in the secreted. Its function is as follows. Modulates blood feeding of female sandflies on vertebrate species by binding and sequestering different mediators involved in the host response. Binds leukotriene C4, leukotriene D4, leukotriene E4 and U-46619, a stable analog of thromboxane A2. Does not bind histamine or serotonin. Inhibits platelet aggregation induced by low concentrations of collagen in thromboxane A2-dependent manner. In Phlebotomus duboscqi (Sandfly), this protein is Long form salivary protein D7L.